The sequence spans 291 residues: Ribosomal large subunit pseudouridine synthase B (291 aa).

The S4 RNA-binding domain maps to 3–75; sequence EKLQKVLARA…ICRVLAYYKP (73 aa). The Nucleophile role is filled by aspartate 110. The interval 256-291 is disordered; it reads VEKDRRRMKANQIRRAVKRHSQVSGGRRSGGRNNNG.

Belongs to the pseudouridine synthase RsuA family.

The enzyme catalyses uridine(2605) in 23S rRNA = pseudouridine(2605) in 23S rRNA. Functionally, responsible for synthesis of pseudouridine from uracil-2605 in 23S ribosomal RNA. The chain is Ribosomal large subunit pseudouridine synthase B (rluB) from Escherichia coli (strain K12).